The sequence spans 283 residues: 1-acyl-sn-glycerol-3-phosphate acyltransferase alpha (283 aa).

Residues 1-26 (MDLWPGAWMLLLLLFLLLLFLLPTLW) form the signal peptide. Topologically, residues 27–37 (FCSPSAKYFFK) are lumenal. A helical membrane pass occupies residues 38 to 58 (MAFYNGWILFLAVLAIPVCAV). Over 59 to 127 (RGRNVENMKI…PGRCVPIAKR (69 aa)) the chain is Cytoplasmic. The HXXXXD motif motif lies at 104-109 (HQSSLD). Residues 128 to 148 (ELLWAGSAGLACWLAGVIFID) traverse the membrane as a helical segment. Residues 149–283 (RKRTGDAISV…DYLKKPGGGG (135 aa)) are Lumenal-facing. Positions 178-181 (EGTR) match the EGTR motif motif.

The protein belongs to the 1-acyl-sn-glycerol-3-phosphate acyltransferase family. Widely expressed. Expressed in adipose tissue and at high levels in testis and pancreas. Expressed at lower levels in tissues such as heart, brain, placenta, kidney, lung, spleen, thymus, prostate, ovary, intestine, colon, leukocyte and liver.

It localises to the endoplasmic reticulum membrane. The enzyme catalyses a 1-acyl-sn-glycero-3-phosphate + an acyl-CoA = a 1,2-diacyl-sn-glycero-3-phosphate + CoA. It carries out the reaction 1-(9Z-octadecenoyl)-sn-glycero-3-phosphate + (9Z)-octadecenoyl-CoA = 1,2-di-(9Z-octadecenoyl)-sn-glycero-3-phosphate + CoA. It catalyses the reaction 1-(9Z-octadecenoyl)-sn-glycero-3-phosphate + hexadecanoyl-CoA = 1-(9Z)-octadecenoyl-2-hexadecanoyl-sn-glycero-3-phosphate + CoA. The catalysed reaction is heptadecanoyl-CoA + 1-(9Z-octadecenoyl)-sn-glycero-3-phosphate = 1-(9Z)-octadecenoyl-2-heptadecanoyl-sn-glycero-3-phosphate + CoA. The enzyme catalyses 1-(9Z-octadecenoyl)-sn-glycero-3-phosphate + octadecanoyl-CoA = 1-(9Z-octadecenoyl)-2-octadecanoyl-sn-glycero-3-phosphate + CoA. It carries out the reaction 1-(9Z-octadecenoyl)-sn-glycero-3-phosphate + (9Z,12Z)-octadecadienoyl-CoA = 1-(9Z)-octadecenoyl-2-(9Z,12Z)-octadecadienoyl-sn-glycero-3-phosphate + CoA. It catalyses the reaction 1-(9Z-octadecenoyl)-sn-glycero-3-phosphate + tetradecanoyl-CoA = 1-(9Z)-octadecenoyl-2-tetradecanoyl-sn-glycero-3-phosphate + CoA. The catalysed reaction is pentadecanoyl-CoA + 1-(9Z-octadecenoyl)-sn-glycero-3-phosphate = 1-(9Z)-octadecenoyl-2-pentadecanoyl-sn-glycero-3-phosphate + CoA. The enzyme catalyses 1-hexadecanoyl-sn-glycero-3-phosphate + (9Z)-octadecenoyl-CoA = 1-hexadecanoyl-2-(9Z-octadecenoyl)-sn-glycero-3-phosphate + CoA. It carries out the reaction 1-(9Z,12Z,15Z)-octadecatrienoyl-sn-glycero-3-phosphate + (9Z)-octadecenoyl-CoA = 1-(9Z,12Z,15Z)-octadecatrienoyl-2-(9Z)-octadecenoyl-sn-glycero-3-phosphate + CoA. It catalyses the reaction 1-(6Z,9Z,12Z-octadecatrienoyl)-sn-glycero-3-phosphate + (9Z)-octadecenoyl-CoA = (6Z,9Z,12Z)-octadecatrienoyl-2-(9Z)-octadecenoyl-sn-glycero-3-phosphate + CoA. The catalysed reaction is 1-eicosanoyl-sn-glycero-3-phosphate + (9Z)-octadecenoyl-CoA = 1-eicosanoyl-2-(9Z)-octadecenoyl-sn-glycero-3-phosphate + CoA. The enzyme catalyses 1-tetradecanoyl-sn-glycerol 3-phosphate + (9Z)-octadecenoyl-CoA = 1-tetradecanoyl-2-(9Z)-octadecenoyl-sn-glycero-3-phosphate + CoA. It carries out the reaction 1-(9Z-octadecenoyl)-sn-glycero-3-phosphate + (5Z,8Z,11Z,14Z)-eicosatetraenoyl-CoA = 1-(9Z)-octadecenoyl-2-(5Z,8Z,11Z,14Z)-eicosatetraenoyl-sn-glycero-3-phosphate + CoA. It catalyses the reaction 1-(9Z-octadecenoyl)-sn-glycero-3-phosphate + dodecanoyl-CoA = 1-(9Z)-octadecenoyl-2-dodecanoyl-sn-glycero-3-phosphate + CoA. The catalysed reaction is (6Z)-octadecenoyl-CoA + 1-(9Z-octadecenoyl)-sn-glycero-3-phosphate = 1-(9Z)-octadecenoyl-2-(6Z)-octadecenoyl-sn-glycero-3-phosphate + CoA. The enzyme catalyses (11Z)-octadecenoyl-CoA + 1-(9Z-octadecenoyl)-sn-glycero-3-phosphate = 1-(9Z)-octadecenoyl-2-(11Z)-octadecenoyl-sn-glycero-3-phosphate + CoA. It carries out the reaction (9Z)-hexadecenoyl-CoA + 1-(9Z-octadecenoyl)-sn-glycero-3-phosphate = 1-(9Z-octadecenoyl)-2-(9Z-hexadecenoyl)-sn-glycero-3-phosphate + CoA. It functions in the pathway phospholipid metabolism; CDP-diacylglycerol biosynthesis; CDP-diacylglycerol from sn-glycerol 3-phosphate: step 2/3. Converts 1-acyl-sn-glycerol-3-phosphate (lysophosphatidic acid or LPA) into 1,2-diacyl-sn-glycerol-3-phosphate (phosphatidic acid or PA) by incorporating an acyl moiety at the sn-2 position of the glycerol backbone. The polypeptide is 1-acyl-sn-glycerol-3-phosphate acyltransferase alpha (AGPAT1) (Homo sapiens (Human)).